Here is a 429-residue protein sequence, read N- to C-terminus: L-cysteine:1D-myo-inositol 2-amino-2-deoxy-alpha-D-glucopyranoside ligase (429 aa).

A Zn(2+)-binding site is contributed by Cys-60. L-cysteinyl-5'-AMP-binding positions include 60-63 (CGIT), Thr-75, and 98-100 (NIT). Positions 62–72 (ITPYDATHLGH) match the 'HIGH' region motif. A 'ERGGDP' region motif is present at residues 204 to 209 (ERGGDP). Trp-244 is a binding site for L-cysteinyl-5'-AMP. Cys-248 serves as a coordination point for Zn(2+). 266-268 (GSD) is an L-cysteinyl-5'-AMP binding site. His-273 lines the Zn(2+) pocket. Ile-300 serves as a coordination point for L-cysteinyl-5'-AMP. The 'KMSKS' region signature appears at 306 to 310 (KMSKS).

Belongs to the class-I aminoacyl-tRNA synthetase family. MshC subfamily. Monomer. The cofactor is Zn(2+).

It carries out the reaction 1D-myo-inositol 2-amino-2-deoxy-alpha-D-glucopyranoside + L-cysteine + ATP = 1D-myo-inositol 2-(L-cysteinylamino)-2-deoxy-alpha-D-glucopyranoside + AMP + diphosphate + H(+). Its function is as follows. Catalyzes the ATP-dependent condensation of GlcN-Ins and L-cysteine to form L-Cys-GlcN-Ins. In Mycolicibacterium vanbaalenii (strain DSM 7251 / JCM 13017 / BCRC 16820 / KCTC 9966 / NRRL B-24157 / PYR-1) (Mycobacterium vanbaalenii), this protein is L-cysteine:1D-myo-inositol 2-amino-2-deoxy-alpha-D-glucopyranoside ligase.